The primary structure comprises 265 residues: Hydroxyethylthiazole kinase (265 aa).

M50 is a binding site for substrate. ATP is bound by residues R125 and T171. Substrate is bound at residue G198.

Belongs to the Thz kinase family. Requires Mg(2+) as cofactor.

The enzyme catalyses 5-(2-hydroxyethyl)-4-methylthiazole + ATP = 4-methyl-5-(2-phosphooxyethyl)-thiazole + ADP + H(+). It participates in cofactor biosynthesis; thiamine diphosphate biosynthesis; 4-methyl-5-(2-phosphoethyl)-thiazole from 5-(2-hydroxyethyl)-4-methylthiazole: step 1/1. Catalyzes the phosphorylation of the hydroxyl group of 4-methyl-5-beta-hydroxyethylthiazole (THZ). This is Hydroxyethylthiazole kinase from Salmonella paratyphi B (strain ATCC BAA-1250 / SPB7).